A 61-amino-acid chain; its full sequence is Probable tautomerase SMU_1087 (61 aa).

Residue Pro2 is the Proton acceptor; via imino nitrogen of the active site.

Belongs to the 4-oxalocrotonate tautomerase family.

This is Probable tautomerase SMU_1087 from Streptococcus mutans serotype c (strain ATCC 700610 / UA159).